The chain runs to 439 residues: Diaminopimelate decarboxylase (439 aa).

Lys-66 carries the post-translational modification N6-(pyridoxal phosphate)lysine. Pyridoxal 5'-phosphate is bound by residues Gly-248 and 290–293; that span reads EPGR. The substrate site is built by Arg-293, Arg-330, and Tyr-334. Residue Cys-361 is the Proton donor of the active site. The substrate site is built by Glu-362 and Tyr-390. Pyridoxal 5'-phosphate is bound at residue Tyr-390.

This sequence belongs to the Orn/Lys/Arg decarboxylase class-II family. LysA subfamily. Homodimer. It depends on pyridoxal 5'-phosphate as a cofactor.

The catalysed reaction is meso-2,6-diaminopimelate + H(+) = L-lysine + CO2. Its pathway is amino-acid biosynthesis; L-lysine biosynthesis via DAP pathway; L-lysine from DL-2,6-diaminopimelate: step 1/1. Its function is as follows. Specifically catalyzes the decarboxylation of meso-diaminopimelate (meso-DAP) to L-lysine. This Bacillus subtilis (strain 168) protein is Diaminopimelate decarboxylase.